The chain runs to 185 residues: Guanosine deaminase (185 aa).

The CMP/dCMP-type deaminase domain maps to 28 to 142 (DSDHKFLTQA…AAIAIGFDDF (115 aa)). Residue His80 participates in Zn(2+) binding. The active-site Proton donor is Glu82. The Zn(2+) site is built by Cys110 and Cys113.

Belongs to the cytidine and deoxycytidylate deaminase family. As to expression, expressed in roots, leaves, flowers and siliques.

The protein resides in the cytoplasm. It is found in the nucleus. It catalyses the reaction guanosine + H2O + H(+) = xanthosine + NH4(+). Functionally, catalyzes the hydrolytic deamination of guanosine, producing xanthosine and ammonia. Deaminates exclusively guanosine and 2'-deoxyguanosine but no other aminated purines, pyrimidines, or pterines. Deamination of guanosine by GSDA is the only source of xanthosine production in Arabidopsis. The polypeptide is Guanosine deaminase (Arabidopsis thaliana (Mouse-ear cress)).